A 947-amino-acid chain; its full sequence is Protein translocase subunit SecA (947 aa).

ATP-binding positions include Gln87, 105–109 (GEGKT), and Asp525. A disordered region spans residues 905-928 (PADNADKTARNPNDPSTWGKVGRN). Residues Cys931, Cys933, Cys942, and His943 each contribute to the Zn(2+) site.

This sequence belongs to the SecA family. As to quaternary structure, monomer and homodimer. Part of the essential Sec protein translocation apparatus which comprises SecA, SecYEG and auxiliary proteins SecDF-YajC and YidC. It depends on Zn(2+) as a cofactor.

It localises to the cell inner membrane. Its subcellular location is the cytoplasm. It carries out the reaction ATP + H2O + cellular proteinSide 1 = ADP + phosphate + cellular proteinSide 2.. In terms of biological role, part of the Sec protein translocase complex. Interacts with the SecYEG preprotein conducting channel. Has a central role in coupling the hydrolysis of ATP to the transfer of proteins into and across the cell membrane, serving both as a receptor for the preprotein-SecB complex and as an ATP-driven molecular motor driving the stepwise translocation of polypeptide chains across the membrane. This Rhodopseudomonas palustris (strain BisB18) protein is Protein translocase subunit SecA.